The following is a 410-amino-acid chain: Secreted protein PRY1 (410 aa).

Positions 1 to 20 (MKQNYILSIILCYLLANVHS) are cleaved as a signal peptide. Disordered stretches follow at residues 64-86 (PAPV…STPS), 102-132 (SDSD…SSSS), and 148-260 (SSSS…SSSS). Over residues 148–179 (SSSSTPSSISQQQQQQQGSPASGSNSPNSAQP) the composition is skewed to low complexity. The span at 197–211 (SGLGSGFGSGFGSGS) shows a compositional bias: gly residues. Residues 212 to 260 (GSDSDSGSGLPSASSSTIIQQQPSSSNIGSSSTSSSSSSSSSSSSSSSS) show a composition bias toward low complexity. In terms of domain architecture, SCP spans 283 to 394 (LDAHNKYRAQ…NWGLYVVCEY (112 aa)).

It belongs to the CRISP family.

The protein resides in the secreted. Its function is as follows. Secreted protein that acts as a virulence factor during infections. The polypeptide is Secreted protein PRY1 (PRY1) (Candida albicans (strain SC5314 / ATCC MYA-2876) (Yeast)).